Reading from the N-terminus, the 155-residue chain is Cytochrome P450 (155 aa).

Cys99 provides a ligand contact to heme.

This sequence belongs to the cytochrome P450 family. Heme serves as cofactor.

In Helianthus annuus (Common sunflower), this protein is Cytochrome P450.